We begin with the raw amino-acid sequence, 2295 residues long: Protein DOP1B (2295 aa).

Residues serine 556 and serine 597 each carry the phosphoserine modification. Disordered stretches follow at residues alanine 574 to glutamate 599, glycine 651 to proline 684, cysteine 1034 to threonine 1059, and aspartate 1092 to leucine 1136. Over residues alanine 1111–histidine 1131 the composition is skewed to polar residues. Serine 1167 bears the Phosphoserine mark.

The protein belongs to the DOP1 family. In terms of assembly, homooligomer. Heterotrimer with ATP9A and MON2; this interaction is retromer-independent. Interacts with SNX3. Expressed in liver, heart and brain.

It localises to the early endosome membrane. The protein localises to the golgi apparatus membrane. In terms of biological role, may play a role in regulating membrane trafficking of cargo proteins. Together with ATP9A and MON2, regulates SNX3 retromer-mediated endosomal sorting of WLS away from lysosomal degradation. The protein is Protein DOP1B (Dop1b) of Mus musculus (Mouse).